A 343-amino-acid polypeptide reads, in one-letter code: 4-hydroxythreonine-4-phosphate dehydrogenase (343 aa).

Residues histidine 141 and threonine 142 each coordinate substrate. The a divalent metal cation site is built by histidine 175, histidine 220, and histidine 275. Residues lysine 283, asparagine 292, and arginine 301 each coordinate substrate.

This sequence belongs to the PdxA family. Homodimer. It depends on Zn(2+) as a cofactor. Mg(2+) is required as a cofactor. The cofactor is Co(2+).

It is found in the cytoplasm. The enzyme catalyses 4-(phosphooxy)-L-threonine + NAD(+) = 3-amino-2-oxopropyl phosphate + CO2 + NADH. It participates in cofactor biosynthesis; pyridoxine 5'-phosphate biosynthesis; pyridoxine 5'-phosphate from D-erythrose 4-phosphate: step 4/5. In terms of biological role, catalyzes the NAD(P)-dependent oxidation of 4-(phosphooxy)-L-threonine (HTP) into 2-amino-3-oxo-4-(phosphooxy)butyric acid which spontaneously decarboxylates to form 3-amino-2-oxopropyl phosphate (AHAP). The protein is 4-hydroxythreonine-4-phosphate dehydrogenase of Janthinobacterium sp. (strain Marseille) (Minibacterium massiliensis).